The chain runs to 530 residues: MSGKIDKILIVGGGTAGWMAASYLGKALQGTADITLLQAPDIPTLGVGEATIPNLQTAFFDFLGIPEDEWMRECNASYKVAIKFINWRTAGEGTSEARELDGGPDHFYHSFGLLKYHEQIPLSHYWFDRSYRGKTVEPFDYACYKEPVILDANRSPRRLDGSKVTNYAWHFDAHLVADFLRRFATEKLGVRHVEDRVEHVQRDANGNIESVRTATGRVFDADLFVDCSGFRGLLINKAMEEPFLDMSDHLLNDSAVATQVPHDDDANGVEPFTSAIAMKSGWTWKIPMLGRFGTGYVYSSRFATEDEAVREFCEMWHLDPETQPLNRIRFRVGRNRRAWVGNCVSIGTSSCFVEPLESTGIYFVYAALYQLVKHFPDKSLNPVLTARFNREIETMFDDTRDFIQAHFYFSPRTDTPFWRANKELRLADGMQEKIDMYRAGMAINAPASDDAQLYYGNFEEEFRNFWNNSNYYCVLAGLGLVPDAPSPRLAHMPQATESVDEVFGAVKDRQRNLLETLPSLHEFLRQQHGR.

Gly-13, Thr-15, Ala-16, Ala-39, Asp-41, Glu-49, and Ala-50 together coordinate FAD. Lys-79 is an active-site residue. Residues Val-197 and Thr-348 each coordinate FAD. An L-tryptophan-binding site is contributed by Glu-357. Thr-359 and Gly-360 together coordinate chloride. Residue Ile-361 participates in FAD binding. Positions 454, 455, 461, and 465 each coordinate L-tryptophan.

The protein belongs to the flavin-dependent halogenase family. Bacterial tryptophan halogenase subfamily. As to quaternary structure, homodimer.

It catalyses the reaction L-tryptophan + FADH2 + chloride + O2 = 7-chloro-L-tryptophan + FAD + 2 H2O. Functionally, involved in the biosynthesis of the indolocarbazole antitumor agent rebeccamycin. Catalyzes the chlorination of tryptophan (Trp) at C7 position to yield 7-chlorotryptophan. It is also able to use bromide ions to generate monobrominated Trp. This is Tryptophan 7-halogenase RebH (rebH) from Lentzea aerocolonigenes (Lechevalieria aerocolonigenes).